Reading from the N-terminus, the 398-residue chain is Tyrosine--tRNA ligase (398 aa).

The short motif at 42–51 (PTAPDIHLGH) is the 'HIGH' region element. Positions 226 to 230 (KMSKS) match the 'KMSKS' region motif. Lys229 provides a ligand contact to ATP. The 62-residue stretch at 336–397 (LAIANLLKDA…GKRKFAKVTL (62 aa)) folds into the S4 RNA-binding domain.

The protein belongs to the class-I aminoacyl-tRNA synthetase family. TyrS type 2 subfamily. In terms of assembly, homodimer.

Its subcellular location is the cytoplasm. It catalyses the reaction tRNA(Tyr) + L-tyrosine + ATP = L-tyrosyl-tRNA(Tyr) + AMP + diphosphate + H(+). Its function is as follows. Catalyzes the attachment of tyrosine to tRNA(Tyr) in a two-step reaction: tyrosine is first activated by ATP to form Tyr-AMP and then transferred to the acceptor end of tRNA(Tyr). The sequence is that of Tyrosine--tRNA ligase from Shewanella oneidensis (strain ATCC 700550 / JCM 31522 / CIP 106686 / LMG 19005 / NCIMB 14063 / MR-1).